A 258-amino-acid chain; its full sequence is Methylthioribulose-1-phosphate dehydratase (258 aa).

Residues Met-1–Asp-20 show a composition bias toward polar residues. The disordered stretch occupies residues Met-1–Asn-21. Residue Cys-105 coordinates substrate. 2 residues coordinate Zn(2+): His-123 and His-125. Residue Glu-153 is the Proton donor/acceptor of the active site. Residue His-210 participates in Zn(2+) binding.

Belongs to the aldolase class II family. MtnB subfamily. Requires Zn(2+) as cofactor.

It is found in the cytoplasm. The enzyme catalyses 5-(methylsulfanyl)-D-ribulose 1-phosphate = 5-methylsulfanyl-2,3-dioxopentyl phosphate + H2O. It functions in the pathway amino-acid biosynthesis; L-methionine biosynthesis via salvage pathway; L-methionine from S-methyl-5-thio-alpha-D-ribose 1-phosphate: step 2/6. In terms of biological role, catalyzes the dehydration of methylthioribulose-1-phosphate (MTRu-1-P) into 2,3-diketo-5-methylthiopentyl-1-phosphate (DK-MTP-1-P). This chain is Methylthioribulose-1-phosphate dehydratase, found in Chaetomium globosum (strain ATCC 6205 / CBS 148.51 / DSM 1962 / NBRC 6347 / NRRL 1970) (Soil fungus).